Reading from the N-terminus, the 61-residue chain is Small ribosomal subunit protein uS14 (61 aa).

Residues Cys24, Cys27, Cys40, and Cys43 each coordinate Zn(2+).

It belongs to the universal ribosomal protein uS14 family. Zinc-binding uS14 subfamily. As to quaternary structure, part of the 30S ribosomal subunit. Contacts proteins S3 and S10. Zn(2+) is required as a cofactor.

In terms of biological role, binds 16S rRNA, required for the assembly of 30S particles and may also be responsible for determining the conformation of the 16S rRNA at the A site. This is Small ribosomal subunit protein uS14 from Frankia alni (strain DSM 45986 / CECT 9034 / ACN14a).